We begin with the raw amino-acid sequence, 318 residues long: Esterase FVEG_12639 (318 aa).

Active-site residues include Ser-156, Asp-255, and His-285.

Belongs to the AB hydrolase 3 family.

Functionally, esterase; part of the Fusarium detoxification of benzoxazolinone cluster 2 (FDB2) involved in the degradation of benzoxazolinones produced by the host plant. Maize, wheat, and rye produce the 2 benzoxazinone phytoanticipins 2,4-dihy-droxy-7-methoxy-1,4-benzoxazin-3-one (DIMBOA) and 2,4-dihydroxy-1,4-benzoxazin-3-one (DIBOA) that, due to their inherent instability once released, spontaneously degrade to the more stable corresponding benzoxazolinones, 6-methoxy-2-benzoxazolinone (MBOA) and 2-benzoxazolinone (BOA), respectively. The first step in the detoxification of benzoxazolinones involves the hydrolysis of the cyclic ester bond of benzoxazolinones by the FDB1 cluster gamma-lactamase MBL1 to aminophenols. MBL1 is able to convert BOA into 2-aminophenol (2-AP), as well as MBOA into 5-methoxy-2-aminophenol (2-AMP). The FDB2 cluster N-malonyltransferase FDB2/NAT1 then metabolizes aminophenols via N-malonylation to non-toxic malonamic acids. FDB2/NAT1 converts 2-AP into N-(2-hydroxyphenyl) malonamic acid (HPMA) and 2-AMP into N-(2-hydroxy-4-methoxyphenyl) malonamic acid (HMPMA). The duplicated dienlactone hydrolases DLH1 and DLH2 may provide redundant function for hydrolyzing the lactone moiety in the BOA molecule. The roles of the amidases an other enzymes encoded by the 2 FDB clusters have not been identified so far. The sequence is that of Esterase FVEG_12639 from Gibberella moniliformis (strain M3125 / FGSC 7600) (Maize ear and stalk rot fungus).